The primary structure comprises 104 residues: Large ribosomal subunit protein bL21 (104 aa).

This sequence belongs to the bacterial ribosomal protein bL21 family. Part of the 50S ribosomal subunit. Contacts protein L20.

This protein binds to 23S rRNA in the presence of protein L20. In Gluconacetobacter diazotrophicus (strain ATCC 49037 / DSM 5601 / CCUG 37298 / CIP 103539 / LMG 7603 / PAl5), this protein is Large ribosomal subunit protein bL21.